Reading from the N-terminus, the 86-residue chain is Probable weak neurotoxin NNAM3 (86 aa).

An N-terminal signal peptide occupies residues 1–21; that stretch reads MKTLLLTLVVVTIVCLDLGYT. 5 cysteine pairs are disulfide-bonded: C24–C45, C27–C32, C38–C63, C67–C78, and C79–C84.

It belongs to the three-finger toxin family. Ancestral subfamily. Orphan group II sub-subfamily. As to expression, expressed by the venom gland.

It localises to the secreted. Functionally, binds with low affinity to muscular (alpha-1-beta-1-delta-epsilon/CHRNA1-CHRNB1-CHRND-CHRNE) and very low affinity to neuronal (alpha-7/CHRNA7) nicotinic acetylcholine receptor (nAChR). In Naja atra (Chinese cobra), this protein is Probable weak neurotoxin NNAM3.